Reading from the N-terminus, the 330-residue chain is Beta-hexosaminidase (330 aa).

Substrate-binding positions include D62, R70, R130, and 160 to 161; that span reads KH. H173 serves as the catalytic Proton donor/acceptor. D242 acts as the Nucleophile in catalysis.

It belongs to the glycosyl hydrolase 3 family. NagZ subfamily. As to quaternary structure, monomer.

The protein resides in the cytoplasm. The enzyme catalyses Hydrolysis of terminal non-reducing N-acetyl-D-hexosamine residues in N-acetyl-beta-D-hexosaminides.. Its pathway is cell wall biogenesis; peptidoglycan recycling. Functionally, plays a role in peptidoglycan recycling by cleaving the terminal beta-1,4-linked N-acetylglucosamine (GlcNAc) from peptide-linked peptidoglycan fragments, giving rise to free GlcNAc, anhydro-N-acetylmuramic acid and anhydro-N-acetylmuramic acid-linked peptides. Plays a role in beta-lactam antibiotic resistance via its role in generating anhydro-N-acetylmuramic acid-linked peptides; these peptides function as signaling molecules that induce high-level expression of the beta-lactamase AmpC. In Vibrio cholerae serotype O1 (strain ATCC 39315 / El Tor Inaba N16961), this protein is Beta-hexosaminidase.